Here is a 117-residue protein sequence, read N- to C-terminus: Large ribosomal subunit protein bL19 (117 aa).

Belongs to the bacterial ribosomal protein bL19 family.

Functionally, this protein is located at the 30S-50S ribosomal subunit interface and may play a role in the structure and function of the aminoacyl-tRNA binding site. This Shewanella sediminis (strain HAW-EB3) protein is Large ribosomal subunit protein bL19.